Reading from the N-terminus, the 642-residue chain is Threonine--tRNA ligase (642 aa).

The TGS domain occupies 1-61 (MPVITLPDGS…ETDSDLSIIT (61 aa)). Positions 243 to 534 (DHRKIGKQLD…LIEEYAGKFP (292 aa)) are catalytic. Zn(2+) is bound by residues cysteine 334, histidine 385, and histidine 511.

It belongs to the class-II aminoacyl-tRNA synthetase family. As to quaternary structure, homodimer. Zn(2+) is required as a cofactor.

Its subcellular location is the cytoplasm. The catalysed reaction is tRNA(Thr) + L-threonine + ATP = L-threonyl-tRNA(Thr) + AMP + diphosphate + H(+). Its function is as follows. Catalyzes the attachment of threonine to tRNA(Thr) in a two-step reaction: L-threonine is first activated by ATP to form Thr-AMP and then transferred to the acceptor end of tRNA(Thr). Also edits incorrectly charged L-seryl-tRNA(Thr). The chain is Threonine--tRNA ligase from Shewanella pealeana (strain ATCC 700345 / ANG-SQ1).